A 261-amino-acid polypeptide reads, in one-letter code: Sepiapterin reductase (261 aa).

Met-1 is modified (N-acetylmethionine). Position 15 to 21 (15 to 21 (GASRGFG)) interacts with NADP(+). Ser-33 carries the phosphoserine modification. 43–44 (RS) provides a ligand contact to NADP(+). Ser-46 carries the phosphoserine modification. Position 70 to 71 (70 to 71 (DL)) interacts with NADP(+). Residues 158 to 159 (SL) and Tyr-171 contribute to the substrate site. Lys-175 lines the NADP(+) pocket. Ser-196 carries the post-translational modification Phosphoserine. Gly-200 contacts substrate. Position 202-207 (202-207 (LDNDMQ)) interacts with NADP(+). Ser-214 carries the phosphoserine modification. Residues Lys-222 and Asp-258 each contribute to the substrate site.

This sequence belongs to the sepiapterin reductase family. Homodimer.

It localises to the cytoplasm. The catalysed reaction is L-erythro-7,8-dihydrobiopterin + NADP(+) = L-sepiapterin + NADPH + H(+). It carries out the reaction (6R)-L-erythro-5,6,7,8-tetrahydrobiopterin + 2 NADP(+) = 6-pyruvoyl-5,6,7,8-tetrahydropterin + 2 NADPH + 2 H(+). Functionally, catalyzes the final one or two reductions in tetra-hydrobiopterin biosynthesis to form 5,6,7,8-tetrahydrobiopterin. This chain is Sepiapterin reductase (Spr), found in Mus musculus (Mouse).